The chain runs to 349 residues: UDP-N-acetylenolpyruvoylglucosamine reductase (349 aa).

Residues 25 to 197 (GIDARARYAA…VSVTFRLPKR (173 aa)) form the FAD-binding PCMH-type domain. Residue Arg-173 is part of the active site. The Proton donor role is filled by Ser-249. The active site involves Glu-345.

It belongs to the MurB family. The cofactor is FAD.

It localises to the cytoplasm. The enzyme catalyses UDP-N-acetyl-alpha-D-muramate + NADP(+) = UDP-N-acetyl-3-O-(1-carboxyvinyl)-alpha-D-glucosamine + NADPH + H(+). The protein operates within cell wall biogenesis; peptidoglycan biosynthesis. Cell wall formation. The protein is UDP-N-acetylenolpyruvoylglucosamine reductase of Burkholderia multivorans (strain ATCC 17616 / 249).